We begin with the raw amino-acid sequence, 117 residues long: Ig lambda-1 chain V region (117 aa).

Residues 1-20 form the signal peptide; the sequence is MAWISLILSLLALSSGGAIS. A Pyrrolidone carboxylic acid modification is found at Gln-21. In terms of domain architecture, Ig-like spans 21–117; sequence QAVVTQESAL…YFCALWYSNH (97 aa).

In Mus musculus (Mouse), this protein is Ig lambda-1 chain V region.